Consider the following 388-residue polypeptide: Galactokinase (388 aa).

Glutamate 33–aspartate 36 contributes to the substrate binding site. Residues serine 67 and glycine 125 to serine 131 contribute to the ATP site. Serine 131 and glutamate 163 together coordinate Mg(2+). Aspartate 175 acts as the Proton acceptor in catalysis. Residue tyrosine 225 coordinates substrate.

Belongs to the GHMP kinase family. GalK subfamily.

The protein localises to the cytoplasm. It catalyses the reaction alpha-D-galactose + ATP = alpha-D-galactose 1-phosphate + ADP + H(+). It functions in the pathway carbohydrate metabolism; galactose metabolism. In terms of biological role, catalyzes the transfer of the gamma-phosphate of ATP to D-galactose to form alpha-D-galactose-1-phosphate (Gal-1-P). In Limosilactobacillus fermentum (strain NBRC 3956 / LMG 18251) (Lactobacillus fermentum), this protein is Galactokinase.